The sequence spans 280 residues: Energy-coupling factor transporter ATP-binding protein EcfA1 (280 aa).

The 236-residue stretch at 6–241 folds into the ABC transporter domain; the sequence is LRTENISFQY…SHMLQEIGLD (236 aa). 40–47 provides a ligand contact to ATP; the sequence is GQNGSGKS.

Belongs to the ABC transporter superfamily. Energy-coupling factor EcfA family. Forms a stable energy-coupling factor (ECF) transporter complex composed of 2 membrane-embedded substrate-binding proteins (S component), 2 ATP-binding proteins (A component) and 2 transmembrane proteins (T component).

The protein resides in the cell membrane. Its function is as follows. ATP-binding (A) component of a common energy-coupling factor (ECF) ABC-transporter complex. Unlike classic ABC transporters this ECF transporter provides the energy necessary to transport a number of different substrates. The sequence is that of Energy-coupling factor transporter ATP-binding protein EcfA1 from Bacillus cereus (strain ZK / E33L).